The chain runs to 468 residues: Glutamate--tRNA ligase (468 aa).

Positions 12-22 (PSPTGMMHIGT) match the 'HIGH' region motif. Residues 238–242 (KLSKR) carry the 'KMSKS' region motif. An ATP-binding site is contributed by lysine 241.

It belongs to the class-I aminoacyl-tRNA synthetase family. Glutamate--tRNA ligase type 1 subfamily. As to quaternary structure, monomer.

It localises to the cytoplasm. It carries out the reaction tRNA(Glu) + L-glutamate + ATP = L-glutamyl-tRNA(Glu) + AMP + diphosphate. Its function is as follows. Catalyzes the attachment of glutamate to tRNA(Glu) in a two-step reaction: glutamate is first activated by ATP to form Glu-AMP and then transferred to the acceptor end of tRNA(Glu). In Phenylobacterium zucineum (strain HLK1), this protein is Glutamate--tRNA ligase.